Reading from the N-terminus, the 157-residue chain is MNINFTLVSQAIAFSIFIWFTTKFVWPYLLRAIEERQQKIADGLAAGERGKKELELASQRSSEVLKEAKQRAGEIVIQAEKRASDIIEEAKKNARVEGEKILAGAKAEIQHEIFSARESLRQQVAGLAVQGASKILRREVNAKAHADLLASIETELK.

The helical transmembrane segment at 7–29 (LVSQAIAFSIFIWFTTKFVWPYL) threads the bilayer.

This sequence belongs to the ATPase B chain family. In terms of assembly, F-type ATPases have 2 components, F(1) - the catalytic core - and F(0) - the membrane proton channel. F(1) has five subunits: alpha(3), beta(3), gamma(1), delta(1), epsilon(1). F(0) has three main subunits: a(1), b(2) and c(10-14). The alpha and beta chains form an alternating ring which encloses part of the gamma chain. F(1) is attached to F(0) by a central stalk formed by the gamma and epsilon chains, while a peripheral stalk is formed by the delta and b chains.

It is found in the cell inner membrane. Its function is as follows. F(1)F(0) ATP synthase produces ATP from ADP in the presence of a proton or sodium gradient. F-type ATPases consist of two structural domains, F(1) containing the extramembraneous catalytic core and F(0) containing the membrane proton channel, linked together by a central stalk and a peripheral stalk. During catalysis, ATP synthesis in the catalytic domain of F(1) is coupled via a rotary mechanism of the central stalk subunits to proton translocation. In terms of biological role, component of the F(0) channel, it forms part of the peripheral stalk, linking F(1) to F(0). The chain is ATP synthase subunit b from Nitrosomonas eutropha (strain DSM 101675 / C91 / Nm57).